We begin with the raw amino-acid sequence, 655 residues long: MSTIADSKNHGHQKLTAAGLLISLGIIYGDIGTSPLYVMKAIAGGNVISENLILGGLSCVFWTITLQTTIKYVIITLRADNKGEGGIFSLFALIRRRNPNLVWPAMIGGAAMLADGIITPPISVSSAVEGLLIFNKDIPTIPIVLAIIVMLFMIQRFGTNIVGKFFGPIMFIWFAMLATLGLSQLMGNFYVLKAINPMYAFNLLTQYTTVDDKSGFWLLGAVFLCTTGAEALYSDLGHCGRPNIRISWIFVKLALLINYFGQGAWILQNKGYVIKGNPFFGIMPEWFIVYGIIIATMAAIIASQAMISGSYTLISEALRLNLWPKVRVKYPSVKKGQLFIPSINLLLLAGCIFVVLWFGESSAMEGAYGLAINITFLMTTILLAYYLLIIKRISFIWVGLLILMYLIIEVSFLVANLEKFFHGGYFTLISSGILAFIMIIWYTAHRIKRRLTEYVKIQDYFPLIKELSEDTSIPKYSTHLIYLTGADNYTQIESKVIYSIFQKQPKRADIYWFLHIDVVDEPYTMEYKVRTMLADDVIRIDFKLGFRVEHRINLFFRKVVEDMVNNKEVDFTSRYTSLNKRNVIGDFRFVVLEKHLSNDNDLSVMEQFAMDWYFFLKHISISESSAFGLDTSSVTVEKVPMVISPMEAFQLKRVY.

Helical transmembrane passes span 19-39 (GLLI…LYVM), 42-62 (IAGG…CVFW), 102-122 (VWPA…TPPI), 132-152 (LIFN…VMLF), 161-181 (IVGK…ATLG), 214-234 (SGFW…ALYS), 246-266 (ISWI…GAWI), 282-302 (IMPE…AIIA), 338-358 (LFIP…VLWF), 370-390 (LAIN…LLII), 395-415 (FIWV…FLVA), and 420-440 (FFHG…IMII).

Belongs to the HAK/KUP transporter (TC 2.A.72) family.

The protein localises to the cell inner membrane. It carries out the reaction K(+)(in) + H(+)(in) = K(+)(out) + H(+)(out). Functionally, transport of potassium into the cell. Likely operates as a K(+):H(+) symporter. The polypeptide is Probable potassium transport system protein Kup (Cytophaga hutchinsonii (strain ATCC 33406 / DSM 1761 / CIP 103989 / NBRC 15051 / NCIMB 9469 / D465)).